Here is a 1842-residue protein sequence, read N- to C-terminus: Fatty acid synthase subunit alpha (1842 aa).

The segment at 101 to 141 (PAEAPASTSSTPKVETAAAAAPAATPAPAPAQTSAPAAALP) is disordered. Residues 116–139 (TAAAAAPAATPAPAPAQTSAPAAA) are compositionally biased toward low complexity. One can recognise a Carrier domain in the interval 145 to 220 (PKALEVLHTL…AIMQSSFNGS (76 aa)). An O-(pantetheine 4'-phosphoryl)serine modification is found at Ser180. Ser604 is subject to Phosphoserine. The Ketosynthase family 3 (KS3) domain occupies 1079–1616 (LQEVVIDHDL…QVGGQVIVIH (538 aa)). The active-site For beta-ketoacyl synthase activity is the Cys1262. Positions 1304-1332 (GATSNAAKETERGRTPQEMSRPATSTRDG) are disordered. Ser1412 is subject to Phosphoserine. Catalysis depends on for beta-ketoacyl synthase activity residues His1501 and His1542. Residues Asp1728, Val1729, and Glu1730 each contribute to the Mg(2+) site. Residues 1728-1730 (DVE), Tyr1754, Ser1764, 1773-1783 (EAVFKSLGISG), 1797-1800 (SSES), and 1827-1829 (ISH) contribute to the acetyl-CoA site. Mg(2+) contacts are provided by Ser1828 and His1829.

Belongs to the thiolase-like superfamily. Fungal fatty acid synthetase subunit alpha family. In terms of assembly, [Alpha(6)beta(6)] hexamers of two multifunctional subunits (alpha and beta).

The catalysed reaction is acetyl-CoA + n malonyl-CoA + 2n NADPH + 4n H(+) = a long-chain-acyl-CoA + n CoA + n CO2 + 2n NADP(+).. The enzyme catalyses a fatty acyl-[ACP] + malonyl-[ACP] + H(+) = a 3-oxoacyl-[ACP] + holo-[ACP] + CO2. It carries out the reaction a (3R)-hydroxyacyl-[ACP] + NADP(+) = a 3-oxoacyl-[ACP] + NADPH + H(+). In terms of biological role, fatty acid synthetase catalyzes the formation of long-chain fatty acids from acetyl-CoA, malonyl-CoA and NADPH. The alpha subunit contains domains for: acyl carrier protein, 3-oxoacyl-[acyl-carrier-protein] reductase, and 3-oxoacyl-[acyl-carrier-protein] synthase. This subunit coordinates the binding of the six beta subunits to the enzyme complex. The sequence is that of Fatty acid synthase subunit alpha (fas2) from Schizosaccharomyces pombe (strain 972 / ATCC 24843) (Fission yeast).